Consider the following 298-residue polypeptide: ADP/ATP translocase 3 (298 aa).

Methionine 1 is modified (N-acetylmethionine). The Mitochondrial intermembrane portion of the chain corresponds to 1–7 (MTEQAIS). The residue at position 2 (threonine 2) is an N-acetylthreonine; in ADP/ATP translocase 3, N-terminally processed. The stretch at 6–98 (ISFAKDFLAG…FAFKDKYKQI (93 aa)) is one Solcar 1 repeat. A helical transmembrane segment spans residues 8-37 (FAKDFLAGGIAAAISKTAVAPIERVKLLLQ). The Mitochondrial matrix portion of the chain corresponds to 38–74 (VQHASKQIAADKQYKGIVDCIVRIPKEQGVLSFWRGN). Lysine 52 is subject to N6,N6,N6-trimethyllysine. A helical membrane pass occupies residues 75-99 (LANVIRYFPTQALNFAFKDKYKQIF). Residues arginine 80 and lysine 92 each coordinate ADP. Over 100-109 (LGGVDKRTQF) the chain is Mitochondrial intermembrane. N6-acetyllysine is present on lysine 105. A helical transmembrane segment spans residues 110 to 130 (WRYFAGNLASGGAAGATSLCF). 2 Solcar repeats span residues 111–201 (RYFA…AKGM) and 212–297 (VSWM…LKKV). Over 131–178 (VYPLDFARTRLAADVGKSGSEREFRGLGDCLVKITKSDGIRGLYQGFN) the chain is Mitochondrial matrix. The helical transmembrane segment at 179 to 199 (VSVQGIIIYRAAYFGIYDTAK) threads the bilayer. The Mitochondrial intermembrane segment spans residues 200–210 (GMLPDPKNTHI). The chain crosses the membrane as a helical span at residues 211-231 (VVSWMIAQTVTAVAGVVSYPF). The Mitochondrial matrix segment spans residues 232-273 (DTVRRRMMMQSGRKGADIMYKGTVDCWRKILKDEGGKAFFKG). Residue arginine 235 coordinates ADP. The important for transport activity stretch occupies residues 235 to 240 (RRRMMM). The Nucleotide carrier signature motif motif lies at 235 to 240 (RRRMMM). Lysine 268 is subject to N6-acetyllysine. Residues 274–291 (AWSNVLRGMGGAFVLVLY) traverse the membrane as a helical segment. The Mitochondrial intermembrane portion of the chain corresponds to 292–298 (DELKKVI).

It belongs to the mitochondrial carrier (TC 2.A.29) family. As to quaternary structure, monomer. Found in a complex with ARL2, ARL2BP and SLC25A6/ANT3. Post-translationally, trimethylated by ANTKMT at Lys-52.

It is found in the mitochondrion inner membrane. The protein localises to the membrane. It catalyses the reaction ADP(in) + ATP(out) = ADP(out) + ATP(in). The enzyme catalyses H(+)(in) = H(+)(out). With respect to regulation, the matrix-open state (m-state) is inhibited by the membrane-permeable bongkrekic acid (BKA). The cytoplasmic-open state (c-state) is inhibited by the membrane-impermeable toxic inhibitor carboxyatractyloside (CATR). Proton transporter activity is inhibited by ADP:ATP antiporter activity. Functionally, ADP:ATP antiporter that mediates import of ADP into the mitochondrial matrix for ATP synthesis, and export of ATP out to fuel the cell. Cycles between the cytoplasmic-open state (c-state) and the matrix-open state (m-state): operates by the alternating access mechanism with a single substrate-binding site intermittently exposed to either the cytosolic (c-state) or matrix (m-state) side of the inner mitochondrial membrane. In addition to its ADP:ATP antiporter activity, also involved in mitochondrial uncoupling and mitochondrial permeability transition pore (mPTP) activity. Plays a role in mitochondrial uncoupling by acting as a proton transporter: proton transport uncouples the proton flows via the electron transport chain and ATP synthase to reduce the efficiency of ATP production and cause mitochondrial thermogenesis. Proton transporter activity is inhibited by ADP:ATP antiporter activity, suggesting that SLC25A6/ANT3 acts as a master regulator of mitochondrial energy output by maintaining a delicate balance between ATP production (ADP:ATP antiporter activity) and thermogenesis (proton transporter activity). Proton transporter activity requires free fatty acids as cofactor, but does not transport it. Also plays a key role in mPTP opening, a non-specific pore that enables free passage of the mitochondrial membranes to solutes of up to 1.5 kDa, and which contributes to cell death. It is however unclear if SLC25A6/ANT3 constitutes a pore-forming component of mPTP or regulates it. The chain is ADP/ATP translocase 3 from Bos taurus (Bovine).